The chain runs to 167 residues: 3-dehydroquinate dehydratase (167 aa).

Residue tyrosine 22 is the Proton acceptor of the active site. Substrate is bound by residues asparagine 76, histidine 82, and aspartate 89. Histidine 102 functions as the Proton donor in the catalytic mechanism. Residues 103-104 and arginine 113 contribute to the substrate site; that span reads LT.

The protein belongs to the type-II 3-dehydroquinase family. Homododecamer.

The enzyme catalyses 3-dehydroquinate = 3-dehydroshikimate + H2O. It functions in the pathway metabolic intermediate biosynthesis; chorismate biosynthesis; chorismate from D-erythrose 4-phosphate and phosphoenolpyruvate: step 3/7. Functionally, catalyzes a trans-dehydration via an enolate intermediate. The chain is 3-dehydroquinate dehydratase from Helicobacter pylori (strain P12).